Here is a 148-residue protein sequence, read N- to C-terminus: Stathmin (148 aa).

Residues 4-145 (SDIQVKELEK…NKEGKDPGEA (142 aa)) form the SLD domain. S16 is subject to Phosphoserine; by PKA. Position 38 is a phosphoserine; by CDK1 (S38). A coiled-coil region spans residues 41–140 (KKKDLSLEEI…EEVRKNKEGK (100 aa)). S63 carries the post-translational modification Phosphoserine; by PKA. The disordered stretch occupies residues 122–148 (RLREKDKHIEEVRKNKEGKDPGEAETN).

It belongs to the stathmin family. In terms of assembly, binds to two alpha/beta-tubulin heterodimers. Many different phosphorylated forms are observed depending on specific combinations among the sites which can be phosphorylated. MAPK is responsible for the phosphorylation of stathmin in response to NGF.

The protein localises to the cytoplasm. The protein resides in the cytoskeleton. Functionally, involved in the regulation of the microtubule (MT) filament system by destabilizing microtubules. It prevents assembly and promotes disassembly of microtubules. This Gallus gallus (Chicken) protein is Stathmin (STMN1).